A 1002-amino-acid chain; its full sequence is Solute carrier family 12 member 3 (1002 aa).

Residues 1–135 (MAELPVTELP…KSPGEPVRFG (135 aa)) are Cytoplasmic-facing. The residue at position 41 (serine 41) is a Phosphoserine. Threonine 44 is modified (phosphothreonine). Position 47 is a phosphoserine (serine 47). Phosphothreonine is present on residues threonine 48, threonine 53, and threonine 58. Phosphoserine occurs at positions 71 and 89. Threonine 122 carries the phosphothreonine modification. At serine 124 the chain carries Phosphoserine. Residues 136 to 165 (WVKGVMIRCMLNIWGVILYLRLPWITAQAG) traverse the membrane as a discontinuously helical segment. 2 residues coordinate Na(+): leucine 146 and tryptophan 149. The chain crosses the membrane as a helical span at residues 166–187 (IVLTWLIILLSVMVTSITGLSI). At 188-218 (SAISTNGKVKSGGTYFLISRSLGPELGGSIG) the chain is on the cytoplasmic side. The chain crosses the membrane as a helical span at residues 219 to 241 (LIFAFANAVGVAMHTVGFAETVR). At 242 to 253 (DLLQEYGTPIVD) the chain is on the extracellular side. 2 helical membrane-spanning segments follow: residues 254 to 278 (PIND…AGME) and 279 to 301 (WESK…YLVG). Residues 302 to 336 (TLIPASEDKASKGFYSYHGDIFVQNLVPDWRGIDG) lie on the Extracellular side of the membrane. Residues 337–358 (SFFGMFSIFFPSATGILAGANI) form a discontinuously helical membrane-spanning segment. Residues glycine 351, isoleucine 352, and leucine 353 each contribute to the chloride site. At 359 to 369 (SGDLKDPAVAI) the chain is on the cytoplasmic side. The helical transmembrane segment at 370-391 (PKGTLMAIFWTTISYLAISATI) threads the bilayer. Residues 392–451 (GSCVVRDASGDVNDTMTPGPGPCEGLACGYGWNFTECSQQRSCRYGLINYYQTMSMVSAF) are Extracellular-facing. An N-linked (GlcNAc...) asparagine glycan is attached at asparagine 404. A disulfide bridge connects residues cysteine 414 and cysteine 419. Asparagine 424 carries N-linked (GlcNAc...) asparagine glycosylation. Cysteine 428 and cysteine 434 are disulfide-bonded. A helical transmembrane segment spans residues 452 to 475 (APLITAGIFGATLSSALACLVSAA). Na(+) contacts are provided by alanine 462, serine 465, and serine 466. At 476–505 (KVFQCLCEDQLYPLIGFFGKGYGKNREPVR) the chain is on the cytoplasmic side. The helical transmembrane segment at 506 to 520 (GYLLAYAIAVAFIII) threads the bilayer. Topologically, residues 521–525 (AELNT) are extracellular. Residues 526–542 (IAPIISNFFLCSYALIN) form a helical membrane-spanning segment. Tyrosine 538 provides a ligand contact to chloride. Residues 543–565 (FSCFHASITNSPGWRPSFRYYSK) are Cytoplasmic-facing. Transmembrane regions (helical) follow at residues 566–585 (WAAL…LTWW) and 586–597 (AALIAIGVVLFL). Over 598–1002 (LLYVIYKKPE…QENVLTFYCQ (405 aa)) the chain is Cytoplasmic. Positions 613-628 (SVQAGSYNLALSYSVG) are scissor helix. Positions 646, 653, 675, 739, 778, and 779 each coordinate ATP.

Belongs to the SLC12A transporter family. As to quaternary structure, homodimer; adopts a domain-swap conformation at the scissor helices connecting the transmembrane domain and C-terminal domain. Interacts with KLHL3. Interacts with IL18R1; this interaction is increased by IL18 treatment. In terms of processing, ubiquitinated; ubiquitination is essential for regulation of endocytosis. Phosphorylated at Thr-53, Thr-58 and Ser-71 by OXSR1/OSR1 and STK39/SPAK downstream of WNK4, promoting its activity. Phosphorylated in response to IL18. Expressed predominantly in kidney, including in distal tubules (at protein level). Detected at low levels in heart, lung and liver. Not detected in normal aorta, but abundantly expressed in fatty streaks and advanced atherosclerotic lesions. In atherosclerotic lesions, expressed in macrophages, smooth muscle cells and endothelial cells (at protein level).

It is found in the cell membrane. The protein resides in the apical cell membrane. The enzyme catalyses chloride(out) + Na(+)(out) = chloride(in) + Na(+)(in). With respect to regulation, phosphorylation by OXSR1/OSR1 and STK39/SPAK in kidney distal convoluted tubules promotes its activity. Also activated by OXSR1/OSR1 and STK39/SPAK downstream of WNK3. Inhibited by thiazide-type diuretic metolazone. Thiazide drugs, such as polythiazide, specifically inhibit SLC12A3/NCC transporter activity by competing with chloride for binding. Functionally, electroneutral sodium and chloride ion cotransporter, which acts as a key mediator of sodium and chloride reabsorption in kidney distal convoluted tubules. Also acts as a receptor for the pro-inflammatory cytokine IL18, thereby contributing to IL18-induced cytokine production, including IFNG, IL6, IL18 and CCL2. May act either independently of IL18R1, or in a complex with IL18R1. The polypeptide is Solute carrier family 12 member 3 (Mus musculus (Mouse)).